We begin with the raw amino-acid sequence, 583 residues long: MPIAYKNINQLWAYVFTETLKRLGLAYAVICPGSRSTPLAVAFAQQAPDIEGISILDERSAAFFALGLAKATNRPVAIVCTSGTAGANFYPAVIEAQESRVPLLLLTADRPPELRDCHSGQTIDQVKLFGSYPNWQTELALPVSDMGMLGYLRQTVIHSWYRMQAPTPGPVHLNIPFRDPLAPIPDGADLSYLLTKFHPEEFFAGITDTTSLPDHSQLSIPPEWLKSQRGIIIAGVAQPQQPQEYCRAIARLSQTLQWPVLAEGLSPIRNYADLNPYLISTYDLILRNQQLATRLAPDMVIQIGDMPTSKELRTWIDTHQPRRWVIDPSDQNLDPLHGRTTHLRIRVEELGCKGVEEDKSSVSEYLQLWCNAETKVRVNVDETLDKMEDLVECKAAWLLSQILPPETPLFIANSMPVRDVEFFWKPNNLRVRSHFNRGANGIDGTLSTALGIAHRHQSSVLITGDLALLHDTNGFLIRNKFVGHLTIILINNNGGGIFEMLPIAKFEPPFEEFFGTPQDIDFAQLCTTYNVQHELIHSWVHLQQRLNPLPNTGIRVLELRTNRKIDAQWRRDNLSNFAADNII.

Belongs to the TPP enzyme family. MenD subfamily. As to quaternary structure, homodimer. Requires Mg(2+) as cofactor. It depends on Mn(2+) as a cofactor. Thiamine diphosphate is required as a cofactor.

The catalysed reaction is isochorismate + 2-oxoglutarate + H(+) = 5-enolpyruvoyl-6-hydroxy-2-succinyl-cyclohex-3-ene-1-carboxylate + CO2. Its pathway is quinol/quinone metabolism; 1,4-dihydroxy-2-naphthoate biosynthesis; 1,4-dihydroxy-2-naphthoate from chorismate: step 2/7. It participates in cofactor biosynthesis; phylloquinone biosynthesis. Its function is as follows. Catalyzes the thiamine diphosphate-dependent decarboxylation of 2-oxoglutarate and the subsequent addition of the resulting succinic semialdehyde-thiamine pyrophosphate anion to isochorismate to yield 2-succinyl-5-enolpyruvyl-6-hydroxy-3-cyclohexene-1-carboxylate (SEPHCHC). The chain is 2-succinyl-5-enolpyruvyl-6-hydroxy-3-cyclohexene-1-carboxylate synthase from Trichormus variabilis (strain ATCC 29413 / PCC 7937) (Anabaena variabilis).